The sequence spans 184 residues: UPF0397 protein SA2477 (184 aa).

5 helical membrane passes run 11 to 31 (VVAIGIGAAVFVILGRFVVIP), 44 to 64 (AFLALISAIFGPFAGLMTGLV), 77 to 97 (AWWSWVICSGIIGCLYGWIGL), 111 to 131 (MIYFNIGQIIANIICWALIAP), and 148 to 168 (QGVISAVLNIISVGIIGTILL).

It belongs to the UPF0397 family.

Its subcellular location is the cell membrane. The chain is UPF0397 protein SA2477 from Staphylococcus aureus (strain N315).